The following is a 291-amino-acid chain: Cytosolic Fe-S cluster assembly factor CFD1 (291 aa).

24 to 31 (GKGGVGKS) contacts ATP. [4Fe-4S] cluster-binding residues include Cys199 and Cys202. The tract at residues 270-291 (ENEEEAKETAEEEKSRAATNGQ) is disordered. Residues 276–285 (KETAEEEKSR) show a composition bias toward basic and acidic residues.

It belongs to the Mrp/NBP35 ATP-binding proteins family. NUBP2/CFD1 subfamily. Heterotetramer of 2 NBP35 and 2 CFD1 chains. It depends on [4Fe-4S] cluster as a cofactor.

Its subcellular location is the cytoplasm. Functionally, component of the cytosolic iron-sulfur (Fe/S) protein assembly (CIA) machinery. Required for maturation of extramitochondrial Fe-S proteins. The NBP35-CFD1 heterotetramer forms a Fe-S scaffold complex, mediating the de novo assembly of an Fe-S cluster and its transfer to target apoproteins. Required for biogenesis and export of both ribosomal subunits, which may reflect a role in assembly of the Fe/S clusters in RLI1, a protein which performs rRNA processing and ribosome export. The protein is Cytosolic Fe-S cluster assembly factor CFD1 of Yarrowia lipolytica (strain CLIB 122 / E 150) (Yeast).